Consider the following 354-residue polypeptide: tRNA-specific 2-thiouridylase MnmA (354 aa).

ATP contacts are provided by residues 6-13 (LLSGGVDS) and Leu-33. Cys-100 serves as the catalytic Nucleophile. Residues Cys-100 and Cys-195 are joined by a disulfide bond. Residue Gly-123 coordinates ATP. Positions 145–147 (KDQ) are interaction with tRNA. Residue Cys-195 is the Cysteine persulfide intermediate of the active site.

This sequence belongs to the MnmA/TRMU family.

Its subcellular location is the cytoplasm. It carries out the reaction S-sulfanyl-L-cysteinyl-[protein] + uridine(34) in tRNA + AH2 + ATP = 2-thiouridine(34) in tRNA + L-cysteinyl-[protein] + A + AMP + diphosphate + H(+). In terms of biological role, catalyzes the 2-thiolation of uridine at the wobble position (U34) of tRNA, leading to the formation of s(2)U34. The protein is tRNA-specific 2-thiouridylase MnmA of Borrelia duttonii (strain Ly).